Reading from the N-terminus, the 459-residue chain is tRNA modification GTPase MnmE (459 aa).

3 residues coordinate (6S)-5-formyl-5,6,7,8-tetrahydrofolate: arginine 22, glutamate 85, and arginine 124. Positions 221-380 constitute a TrmE-type G domain; sequence GLSTVIVGKP…LELQIRDLFF (160 aa). Asparagine 231 contacts K(+). Residues 231-236, 250-256, and 275-278 contribute to the GTP site; these read NVGKSS, TEVAGTT, and DTAG. Serine 235 serves as a coordination point for Mg(2+). K(+) is bound by residues threonine 250, valine 252, and threonine 255. Threonine 256 provides a ligand contact to Mg(2+). (6S)-5-formyl-5,6,7,8-tetrahydrofolate is bound at residue lysine 459.

Belongs to the TRAFAC class TrmE-Era-EngA-EngB-Septin-like GTPase superfamily. TrmE GTPase family. In terms of assembly, homodimer. Heterotetramer of two MnmE and two MnmG subunits. Requires K(+) as cofactor.

The protein localises to the cytoplasm. Its function is as follows. Exhibits a very high intrinsic GTPase hydrolysis rate. Involved in the addition of a carboxymethylaminomethyl (cmnm) group at the wobble position (U34) of certain tRNAs, forming tRNA-cmnm(5)s(2)U34. The chain is tRNA modification GTPase MnmE from Staphylococcus haemolyticus (strain JCSC1435).